The following is a 406-amino-acid chain: Tryptophan synthase beta chain (406 aa).

Lysine 97 carries the post-translational modification N6-(pyridoxal phosphate)lysine.

It belongs to the TrpB family. In terms of assembly, tetramer of two alpha and two beta chains. Requires pyridoxal 5'-phosphate as cofactor.

It catalyses the reaction (1S,2R)-1-C-(indol-3-yl)glycerol 3-phosphate + L-serine = D-glyceraldehyde 3-phosphate + L-tryptophan + H2O. Its pathway is amino-acid biosynthesis; L-tryptophan biosynthesis; L-tryptophan from chorismate: step 5/5. Its function is as follows. The beta subunit is responsible for the synthesis of L-tryptophan from indole and L-serine. This Lacticaseibacillus casei (strain BL23) (Lactobacillus casei) protein is Tryptophan synthase beta chain.